The following is a 201-amino-acid chain: 3-isopropylmalate dehydratase small subunit (201 aa).

Belongs to the LeuD family. LeuD type 1 subfamily. Heterodimer of LeuC and LeuD.

It carries out the reaction (2R,3S)-3-isopropylmalate = (2S)-2-isopropylmalate. The protein operates within amino-acid biosynthesis; L-leucine biosynthesis; L-leucine from 3-methyl-2-oxobutanoate: step 2/4. In terms of biological role, catalyzes the isomerization between 2-isopropylmalate and 3-isopropylmalate, via the formation of 2-isopropylmaleate. This chain is 3-isopropylmalate dehydratase small subunit, found in Xanthobacter autotrophicus (strain ATCC BAA-1158 / Py2).